The primary structure comprises 339 residues: DNA-directed RNA polymerase subunit alpha (339 aa).

Positions 1-233 (MVREEVAGST…DLFLPFLHAE (233 aa)) are alpha N-terminal domain (alpha-NTD). The segment at 264-339 (KKGIPLNCIF…IDLLKNKLSF (76 aa)) is alpha C-terminal domain (alpha-CTD).

This sequence belongs to the RNA polymerase alpha chain family. As to quaternary structure, in plastids the minimal PEP RNA polymerase catalytic core is composed of four subunits: alpha, beta, beta', and beta''. When a (nuclear-encoded) sigma factor is associated with the core the holoenzyme is formed, which can initiate transcription.

Its subcellular location is the plastid. The protein localises to the chloroplast. The enzyme catalyses RNA(n) + a ribonucleoside 5'-triphosphate = RNA(n+1) + diphosphate. In terms of biological role, DNA-dependent RNA polymerase catalyzes the transcription of DNA into RNA using the four ribonucleoside triphosphates as substrates. This chain is DNA-directed RNA polymerase subunit alpha, found in Festucopsis festucoides.